The chain runs to 353 residues: Guanine nucleotide-binding protein G(q) subunit alpha (353 aa).

S-palmitoyl cysteine attachment occurs at residues Cys-3 and Cys-4. Residues 32-353 form the G-alpha domain; the sequence is RELKLLLLGT…QLNLKEYNLV (322 aa). The G1 motif stretch occupies residues 35–48; the sequence is KLLLLGTGESGKST. Residues 40-47, 174-180, 199-203, 268-271, and Ala-325 each bind GTP; these read GTGESGKS, LRVRAPT, DVGGQ, and NKKD. Mg(2+) contacts are provided by Ser-47 and Thr-180. The segment at 172–180 is G2 motif; it reads DILRVRAPT. Residues 195 to 204 are G3 motif; that stretch reads FRMVDVGGQR. Residues 264-271 are G4 motif; it reads ILFLNKKD. The interval 323–328 is G5 motif; it reads TCATDT.

The protein belongs to the G-alpha family. G(q) subfamily. In terms of assembly, g proteins are composed of 3 units; alpha, beta and gamma. The alpha chain contains the guanine nucleotide binding site.

Its function is as follows. Guanine nucleotide-binding proteins (G proteins) are involved as modulators or transducers in various transmembrane signaling systems. This chain is Guanine nucleotide-binding protein G(q) subunit alpha, found in Homarus americanus (American lobster).